The chain runs to 503 residues: Major facilitator superfamily domain-containing protein 4A (503 aa).

12 consecutive transmembrane segments (helical) span residues 19 to 39, 53 to 73, 82 to 102, 105 to 125, 139 to 159, 214 to 234, 289 to 309, 338 to 358, 366 to 386, 392 to 412, 427 to 447, and 455 to 475; these read LTYWSVFFSFGLCIAFLGPTL, ITWVFFAQQFCLLVGSTLGGV, LFLLFLSSLTISVVFVIIPFC, VGVLALVMAIAGLAMGCIDTI, AIFLQVLHFFVGFGALLSPLI, YAFWIMAAINLPVPVAVFYLI, IWNAPFTFFAIHMCAAVTLFM, GYLPSLFWAFITLGRLISIPV, SMLFINLIGVTATFLFLLLSQ, MFVGTALLGLWLSSVFPSMLA, VLVTGAGMGEMVLQILVGSVM, and FLVCGICLSSLAFTLYAVLLV. Residues 484–503 are disordered; it reads SEDSACKPPGLDGEATSYQS.

This sequence belongs to the major facilitator superfamily.

The protein localises to the membrane. The sequence is that of Major facilitator superfamily domain-containing protein 4A (mfsd4a) from Xenopus tropicalis (Western clawed frog).